We begin with the raw amino-acid sequence, 381 residues long: Glycerate 2-kinase (381 aa).

It belongs to the glycerate kinase type-1 family.

It carries out the reaction (R)-glycerate + ATP = (2R)-2-phosphoglycerate + ADP + H(+). In terms of biological role, catalyzes the transfer of the phosphate group from adenosine triphosphate (ATP) to (R)-glycerate to form (2R)-2-phosphoglycerate, an enzymatic step in (L)-glucarate/galactarate catabolic pathway. This chain is Glycerate 2-kinase (garK), found in Escherichia coli (strain K12).